The sequence spans 455 residues: Alcohol acyl transferase 1 allele RGb (455 aa).

Residues His164 and Asn385 each act as proton acceptor in the active site.

The protein belongs to the plant acyltransferase family.

In terms of biological role, involved in the biosynthesis of volatile esters which confer ripe apple fruit flavor. Alcohol acyl transferase that can use a wide range of alcohols as substrate to produce esters. This is Alcohol acyl transferase 1 allele RGb from Malus domestica (Apple).